The chain runs to 567 residues: Lipase maturation factor 1 (567 aa).

The segment at 1–39 (MRPDSPTMAAPAESLRRRKTGYSDPEPESPPAPGRGPAG) is disordered. Residues 1–49 (MRPDSPTMAAPAESLRRRKTGYSDPEPESPPAPGRGPAGSPAHLHTGTF) lie on the Cytoplasmic side of the membrane. A helical membrane pass occupies residues 50–72 (WLTRIVLLKALAFVYFVAFLVAF). The Lumenal portion of the chain corresponds to 73–127 (HQNKQLIGDRGLLPCRVFLKNFQQYFQDRTSWEVFSYMPTILWLMDWSDMNSNLD). The chain crosses the membrane as a helical span at residues 128 to 151 (LLALLGLGISSFVLITGCANMLLM). Topologically, residues 152-207 (AALWGLYMSLVNVGHVWYSFGWESQLLETGFLGIFLCPLWTLSRLPQHTPTSRIVL) are cytoplasmic. Residues 208-221 (WGFRWLIFRIMLGA) form a helical membrane-spanning segment. Over 222–292 (GLIKIRGDRC…LGRRACIIHG (71 aa)) the chain is Lumenal. The chain crosses the membrane as a helical span at residues 293–321 (VLQILFQAVLIVSGNLSFLNWLTMVPSLA). Over 322-367 (CFDDATLGFLFPSGPGSLKDRVLQMQRDIRGARPEPRFGSVVRRAA) the chain is Cytoplasmic. The chain crosses the membrane as a helical span at residues 368–388 (NVSLGVLLAWLSVPVVLNLLS). At 389–567 (SRQVMNTHFN…DRGWPLPGPL (179 aa)) the chain is on the lumenal side.

Belongs to the lipase maturation factor family. As to quaternary structure, interacts with LPL and SEL1L.

The protein resides in the endoplasmic reticulum membrane. Involved in the maturation of specific proteins in the endoplasmic reticulum. Required for maturation and transport of active lipoprotein lipase (LPL) through the secretory pathway. Each LMF1 molecule chaperones 50 or more molecules of LPL. The polypeptide is Lipase maturation factor 1 (LMF1) (Homo sapiens (Human)).